A 184-amino-acid polypeptide reads, in one-letter code: NEDD8-conjugating enzyme Ubc12 (184 aa).

Residues 30–175 (AGELRLHKDI…VRRAMTGGYV (146 aa)) form the UBC core domain. C113 serves as the catalytic Glycyl thioester intermediate.

The protein belongs to the ubiquitin-conjugating enzyme family. UBC12 subfamily. As to quaternary structure, interacts with RBX1. As to expression, expressed in shoot, root and floral meristems, and in vascular tissues of leaves.

It functions in the pathway protein modification; protein neddylation. In terms of biological role, accepts the ubiquitin-like protein NEDD8/RUB1 from the ECR1-AXR1 E1 complex and catalyzes its covalent attachment to other proteins. This is NEDD8-conjugating enzyme Ubc12 (RCE1) from Arabidopsis thaliana (Mouse-ear cress).